The chain runs to 204 residues: Octanoyltransferase (204 aa).

The 175-residue stretch at 30–204 folds into the BPL/LPL catalytic domain; that stretch reads CETPDEIWLL…QSFINQLTDV (175 aa). Substrate-binding positions include 69-76, 136-138, and 149-151; these read RGGQITYH, SLG, and GIA. Catalysis depends on Cys-167, which acts as the Acyl-thioester intermediate.

This sequence belongs to the LipB family.

The protein localises to the cytoplasm. It carries out the reaction octanoyl-[ACP] + L-lysyl-[protein] = N(6)-octanoyl-L-lysyl-[protein] + holo-[ACP] + H(+). The protein operates within protein modification; protein lipoylation via endogenous pathway; protein N(6)-(lipoyl)lysine from octanoyl-[acyl-carrier-protein]: step 1/2. In terms of biological role, catalyzes the transfer of endogenously produced octanoic acid from octanoyl-acyl-carrier-protein onto the lipoyl domains of lipoate-dependent enzymes. Lipoyl-ACP can also act as a substrate although octanoyl-ACP is likely to be the physiological substrate. The polypeptide is Octanoyltransferase (Nitrosomonas europaea (strain ATCC 19718 / CIP 103999 / KCTC 2705 / NBRC 14298)).